The sequence spans 417 residues: Serpin A3-7 (417 aa).

The N-terminal stretch at 1 to 25 (MRTERTSFLLALGLLVSGFCSRVHC) is a signal peptide. N-linked (GlcNAc...) asparagine glycans are attached at residues Asn103, Asn183, Asn221, and Asn267.

Belongs to the serpin family. As to quaternary structure, homodimer.

Its subcellular location is the cytoplasmic vesicle. It localises to the secretory vesicle. The protein resides in the chromaffin granule. The protein localises to the secreted. In terms of biological role, serine protease inhibitor. This is Serpin A3-7 from Bos taurus (Bovine).